The following is a 199-amino-acid chain: dITP/XTP pyrophosphatase (199 aa).

8–13 (SGNAGK) is a binding site for substrate. Catalysis depends on Asp-69, which acts as the Proton acceptor. Asp-69 lines the Mg(2+) pocket. Substrate-binding positions include Ser-70, 154-157 (FGYN), Lys-177, and 182-183 (HR).

It belongs to the HAM1 NTPase family. In terms of assembly, homodimer. Mg(2+) is required as a cofactor.

The enzyme catalyses XTP + H2O = XMP + diphosphate + H(+). The catalysed reaction is dITP + H2O = dIMP + diphosphate + H(+). It carries out the reaction ITP + H2O = IMP + diphosphate + H(+). Its function is as follows. Pyrophosphatase that catalyzes the hydrolysis of nucleoside triphosphates to their monophosphate derivatives, with a high preference for the non-canonical purine nucleotides XTP (xanthosine triphosphate), dITP (deoxyinosine triphosphate) and ITP. Seems to function as a house-cleaning enzyme that removes non-canonical purine nucleotides from the nucleotide pool, thus preventing their incorporation into DNA/RNA and avoiding chromosomal lesions. This Xylella fastidiosa (strain 9a5c) protein is dITP/XTP pyrophosphatase.